The following is a 276-amino-acid chain: Large ribosomal subunit protein uL2 (276 aa).

The segment at 218-255 (PTVRGSAMNPCDHPHGGGEGRTPIGMSSPVTPWGKPAL) is disordered.

It belongs to the universal ribosomal protein uL2 family. As to quaternary structure, part of the 50S ribosomal subunit. Forms a bridge to the 30S subunit in the 70S ribosome.

Functionally, one of the primary rRNA binding proteins. Required for association of the 30S and 50S subunits to form the 70S ribosome, for tRNA binding and peptide bond formation. It has been suggested to have peptidyltransferase activity; this is somewhat controversial. Makes several contacts with the 16S rRNA in the 70S ribosome. The sequence is that of Large ribosomal subunit protein uL2 from Clostridium tetani (strain Massachusetts / E88).